The chain runs to 720 residues: Polyribonucleotide nucleotidyltransferase (720 aa).

Mg(2+)-binding residues include D485 and D491. Residues 552–615 (PRIHTIKINP…EAIRRIQALT (64 aa)) form the KH domain. The 69-residue stretch at 621-689 (GRIYEGKVTR…RQGRIRLSIK (69 aa)) folds into the S1 motif domain. Residues 697 to 720 (PAAESVAESAPAQEAVVEQVPMTE) are disordered. A compositionally biased stretch (low complexity) spans 698 to 720 (AAESVAESAPAQEAVVEQVPMTE).

The protein belongs to the polyribonucleotide nucleotidyltransferase family. In terms of assembly, component of the RNA degradosome, which is a multiprotein complex involved in RNA processing and mRNA degradation. Requires Mg(2+) as cofactor.

Its subcellular location is the cytoplasm. The enzyme catalyses RNA(n+1) + phosphate = RNA(n) + a ribonucleoside 5'-diphosphate. Involved in mRNA degradation. Catalyzes the phosphorolysis of single-stranded polyribonucleotides processively in the 3'- to 5'-direction. The protein is Polyribonucleotide nucleotidyltransferase of Tolumonas auensis (strain DSM 9187 / NBRC 110442 / TA 4).